The chain runs to 243 residues: Juxtaposed with another zinc finger protein 1 (243 aa).

The segment at 12–37 adopts a C2H2-type 1 zinc-finger fold; that stretch reads NTCRFGGCGLHFPTLADLIEHIEDNH. Positions 39–79 are required for interaction with NR2C2; it reads DTDPRVLEKQELQQPTYVALSYINRFMTDAARREQESLKKK. The segment covering 89–108 has biased composition (polar residues); it reads SSSVSRGNVSTPPRHSSGSL. The segment at 89–151 is disordered; that stretch reads SSSVSRGNVS…SDSDESWTTE (63 aa). Phosphothreonine is present on residues T109 and T113. Over residues 118–130 the composition is skewed to low complexity; sequence PSSSFRSSTPTGS. Positions 131-148 are enriched in acidic residues; sequence EYDEEEVDYEESDSDESW. The C2H2-type 2 zinc finger occupies 173-198; the sequence is FACPVPGCKKRYKNVNGIKYHAKNGH. The C2H2-type 3; degenerate zinc-finger motif lies at 208 to 230; that stretch reads FKCRCGKSYKTAQGLRHHTINFH.

In terms of assembly, interacts with NR2C2 (via ligand-binding region). As to expression, expressed in range of tissues with highest expression levels in testis, liver, muscle and fat and lowest levels in kidney. Detected in liver and white adipose tissue (at protein level).

It localises to the nucleus. Functionally, acts as a transcriptional corepressor of orphan nuclear receptor NR2C2. Inhibits expression of the gluconeogenesis enzyme PCK2 through inhibition of NR2C2 activity. Also involved in transcriptional activation of NAMPT by promoting expression of PPARA and PPARD. Plays a role in lipid metabolism by suppressing lipogenesis, increasing lipolysis and decreasing lipid accumulation in adipose tissue. Plays a role in glucose homeostasis by improving glucose metabolism and insulin sensitivity. This Mus musculus (Mouse) protein is Juxtaposed with another zinc finger protein 1 (Jazf1).